The primary structure comprises 296 residues: Cobalamin trafficking protein CblD (296 aa).

The N-terminal 38 residues, 1–38, are a transit peptide targeting the mitochondrion; the sequence is MANVLCNRARLVSYLPGFCSLVKRVVNPKAFSTAGSSG. The residue at position 203 (K203) is an N6-acetyllysine.

In terms of assembly, heterodimer with MMACHC. Forms a multiprotein complex with MMACHC, MTR and MTRR. In terms of tissue distribution, widely expressed at high levels.

It localises to the cytoplasm. Its subcellular location is the mitochondrion. In terms of biological role, involved in cobalamin metabolism and trafficking. Plays a role in regulating the biosynthesis and the proportion of two coenzymes, methylcob(III)alamin (MeCbl) and 5'-deoxyadenosylcobalamin (AdoCbl). Promotes oxidation of cob(II)alamin bound to MMACHC. The processing of cobalamin in the cytosol occurs in a multiprotein complex composed of at least MMACHC, MMADHC, MTRR (methionine synthase reductase) and MTR (methionine synthase) which may contribute to shuttle safely and efficiently cobalamin towards MTR in order to produce methionine. In Homo sapiens (Human), this protein is Cobalamin trafficking protein CblD.